A 432-amino-acid polypeptide reads, in one-letter code: Endosome-associated-trafficking regulator 1 (432 aa).

Serine 18 is modified (phosphoserine). The span at 126–143 (DTTTSRIYPKEASRHPLG) shows a compositional bias: basic and acidic residues. Residues 126 to 145 (DTTTSRIYPKEASRHPLGLE) are disordered. Serine 148 carries the phosphoserine modification. Residues 174 to 196 (LEEDEDDGWNITYLPSAVDQTHS) form a required for interaction with PTPN13 region. The tract at residues 226–250 (PPWTLSDTDSRISPASPAGSPNADF) is disordered. 2 positions are modified to phosphoserine: serine 241 and serine 245. Coiled coils occupy residues 262–289 (LRTLQISYEALKDENSKLRRKLNEVQSF) and 315–370 (FHDL…LRSG).

The protein belongs to the ENTR1 family. In terms of assembly, found in a complex with ENTR1, PTPN13 and GIT1. Interacts with PTPN13 (via the FERM domain). Interacts (via N-terminus) with GIT1 (via N- and C-terminus); this interaction is direct. Interacts with NOD2. Interacts (via N-terminus) with IFT88. Interacts with VPS35. Phosphorylated.

Its subcellular location is the cytoplasm. The protein resides in the early endosome. It localises to the endosome. It is found in the recycling endosome. The protein localises to the midbody. Its subcellular location is the cytoskeleton. The protein resides in the microtubule organizing center. It localises to the centrosome. It is found in the cilium basal body. May be involved in modulation of TNF response. May be involved in presentation of TNFRSF1A on the cell surface. Involved in the endosome-to-plasma membrane trafficking and recycling of SNX27-retromer-dependent cargo proteins, such as GLUT1. Involved in the regulation of cytokinesis; the function may involve PTPN13 and GIT1. Functionally, endosome-associated protein that plays a role in membrane receptor sorting, cytokinesis and ciliogenesis. Involved in the endosome-to-plasma membrane trafficking and recycling of SNX27-retromer-dependent cargo proteins, such as GLUT1. Involved in the regulation of cytokinesis; the function may involve PTPN13 and GIT1. Plays a role in the formation of cilia. Involved in cargo protein localization, such as PKD2, at primary cilia. Involved in the presentation of the tumor necrosis factor (TNF) receptor TNFRSF1A on the cell surface, and hence in the modulation of the TNF-induced apoptosis. This Mus musculus (Mouse) protein is Endosome-associated-trafficking regulator 1.